The primary structure comprises 293 residues: Ribosomal protein L11 methyltransferase (293 aa).

Positions 145, 166, 188, and 230 each coordinate S-adenosyl-L-methionine.

Belongs to the methyltransferase superfamily. PrmA family.

The protein localises to the cytoplasm. The enzyme catalyses L-lysyl-[protein] + 3 S-adenosyl-L-methionine = N(6),N(6),N(6)-trimethyl-L-lysyl-[protein] + 3 S-adenosyl-L-homocysteine + 3 H(+). Its function is as follows. Methylates ribosomal protein L11. The protein is Ribosomal protein L11 methyltransferase of Escherichia coli O81 (strain ED1a).